The chain runs to 155 residues: Large ribosomal subunit protein uL15 (155 aa).

Over residues 1–16 (MVRRFKRAVKYRRGSR) the composition is skewed to basic residues. Residues 1–35 (MVRRFKRAVKYRRGSRTHGWGRVGQHRKSGGSGGK) form a disordered region.

This sequence belongs to the universal ribosomal protein uL15 family. As to quaternary structure, part of the 50S ribosomal subunit.

In terms of biological role, binds to the 23S rRNA. This Pyrobaculum arsenaticum (strain DSM 13514 / JCM 11321 / PZ6) protein is Large ribosomal subunit protein uL15.